We begin with the raw amino-acid sequence, 291 residues long: 4-hydroxybenzoate octaprenyltransferase (291 aa).

8 helical membrane passes run 23 to 43 (PIGTLLLLWPTLWAMWMAADG), 47 to 67 (PALVAIFVVGTVLMRSAGCAI), 98 to 118 (LAVAAVLALVAFTLILPLNAL), 139 to 159 (FFAIPQAYLGIAFGFGIPMAY), 171 to 191 (WLMLAANVLWAIAYDTAYAMV), 216 to 236 (IMLCYAGFFGIMAWVGHALAL), 238 to 258 (AAYWIGLAAAAALAGYYYTLL), and 267 to 287 (FFVFRHNNWFGACVFVGAALA).

This sequence belongs to the UbiA prenyltransferase family. It depends on Mg(2+) as a cofactor.

The protein resides in the cell inner membrane. The catalysed reaction is all-trans-octaprenyl diphosphate + 4-hydroxybenzoate = 4-hydroxy-3-(all-trans-octaprenyl)benzoate + diphosphate. Its pathway is cofactor biosynthesis; ubiquinone biosynthesis. Functionally, catalyzes the prenylation of para-hydroxybenzoate (PHB) with an all-trans polyprenyl group. Mediates the second step in the final reaction sequence of ubiquinone-8 (UQ-8) biosynthesis, which is the condensation of the polyisoprenoid side chain with PHB, generating the first membrane-bound Q intermediate 3-octaprenyl-4-hydroxybenzoate. The chain is 4-hydroxybenzoate octaprenyltransferase from Ralstonia nicotianae (strain ATCC BAA-1114 / GMI1000) (Ralstonia solanacearum).